The following is a 152-amino-acid chain: UPF0225 protein Ent638_2310 (152 aa).

This sequence belongs to the UPF0225 family.

This Enterobacter sp. (strain 638) protein is UPF0225 protein Ent638_2310.